The sequence spans 310 residues: Homoserine kinase (310 aa).

91–101 (PIGSGLGSSAC) contacts ATP.

It belongs to the GHMP kinase family. Homoserine kinase subfamily.

It localises to the cytoplasm. The enzyme catalyses L-homoserine + ATP = O-phospho-L-homoserine + ADP + H(+). It participates in amino-acid biosynthesis; L-threonine biosynthesis; L-threonine from L-aspartate: step 4/5. Functionally, catalyzes the ATP-dependent phosphorylation of L-homoserine to L-homoserine phosphate. In Escherichia coli (strain SMS-3-5 / SECEC), this protein is Homoserine kinase.